The following is a 303-amino-acid chain: Phosphoglycerate mutase 3 (303 aa).

Substrate is bound by residues 13 to 20 (RHGQSELN), 26 to 27 (CG), Arg70, 120 to 123 (ERHY), Lys131, and 147 to 148 (RR). The active-site Tele-phosphohistidine intermediate is the His14. Glu120 serves as the catalytic Proton donor/acceptor. The interval 168–198 (NDQGSSTGYDFKEPNRHLKYGPEEKANERLP) is disordered. Residues 177-198 (DFKEPNRHLKYGPEEKANERLP) are compositionally biased toward basic and acidic residues. 236–237 (GS) provides a ligand contact to substrate.

It belongs to the phosphoglycerate mutase family. BPG-dependent PGAM subfamily.

It catalyses the reaction (2R)-2-phosphoglycerate = (2R)-3-phosphoglycerate. The protein operates within carbohydrate degradation; glycolysis; pyruvate from D-glyceraldehyde 3-phosphate: step 3/5. Functionally, could be non-functional. This is Phosphoglycerate mutase 3 (GPM3) from Saccharomyces cerevisiae (strain ATCC 204508 / S288c) (Baker's yeast).